The sequence spans 147 residues: Hemoglobin subunit beta (147 aa).

Residues 3–147 (EWTDKERSII…VVSALGKQYH (145 aa)) form the Globin domain. Heme b-binding residues include H64 and H93.

It belongs to the globin family. In terms of assembly, hb1 is a heterotetramer of two alpha chains and two beta chains. As to expression, red blood cells.

In terms of biological role, involved in oxygen transport from gills to the various peripheral tissues. This chain is Hemoglobin subunit beta (hbb), found in Trematomus bernacchii (Emerald rockcod).